The sequence spans 194 residues: Large ribosomal subunit protein bL12m (194 aa).

Residues 1–33 constitute a mitochondrion transit peptide; the sequence is MSLRILAKRSSSIWMKTRVTPALISPITITTRF. An N-linked (GlcNAc...) asparagine glycan is attached at N34. The segment at 101–120 is disordered; sequence AGNVPSSTGEAGSGAEEEAK. Over residues 105-114 the composition is skewed to low complexity; that stretch reads PSSTGEAGSG.

It belongs to the bacterial ribosomal protein bL12 family. Component of the mitochondrial large ribosomal subunit (mt-LSU). Mature yeast 74S mitochondrial ribosomes consist of a small (37S) and a large (54S) subunit. The 37S small subunit contains a 15S ribosomal RNA (15S mt-rRNA) and 34 different proteins. The 54S large subunit contains a 21S rRNA (21S mt-rRNA) and 46 different proteins. Post-translationally, N-glycosylated.

It is found in the mitochondrion. Functionally, component of the mitochondrial ribosome (mitoribosome), a dedicated translation machinery responsible for the synthesis of mitochondrial genome-encoded proteins, including at least some of the essential transmembrane subunits of the mitochondrial respiratory chain. The mitoribosomes are attached to the mitochondrial inner membrane and translation products are cotranslationally integrated into the membrane. This Saccharomyces cerevisiae (strain ATCC 204508 / S288c) (Baker's yeast) protein is Large ribosomal subunit protein bL12m (MNP1).